Reading from the N-terminus, the 242-residue chain is Probable septum site-determining protein MinC (242 aa).

This sequence belongs to the MinC family. As to quaternary structure, interacts with MinD and FtsZ.

In terms of biological role, cell division inhibitor that blocks the formation of polar Z ring septums. Rapidly oscillates between the poles of the cell to destabilize FtsZ filaments that have formed before they mature into polar Z rings. Prevents FtsZ polymerization. The sequence is that of Probable septum site-determining protein MinC from Buchnera aphidicola subsp. Schizaphis graminum (strain Sg).